The chain runs to 282 residues: D-alanine aminotransferase (282 aa).

Tyr32 is a binding site for substrate. Arg51 contributes to the pyridoxal 5'-phosphate binding site. Arg99 and His101 together coordinate substrate. The active-site Proton acceptor is Lys146. Lys146 carries the N6-(pyridoxal phosphate)lysine modification. Residue Glu178 coordinates pyridoxal 5'-phosphate.

This sequence belongs to the class-IV pyridoxal-phosphate-dependent aminotransferase family. Homodimer. Pyridoxal 5'-phosphate is required as a cofactor.

The enzyme catalyses D-alanine + 2-oxoglutarate = D-glutamate + pyruvate. Functionally, acts on the D-isomers of alanine, leucine, aspartate, glutamate, aminobutyrate, norvaline and asparagine. The enzyme transfers an amino group from a substrate D-amino acid to the pyridoxal phosphate cofactor to form pyridoxamine and an alpha-keto acid in the first half-reaction. The second half-reaction is the reverse of the first, transferring the amino group from the pyridoxamine to a second alpha-keto acid to form the product D-amino acid via a ping-pong mechanism. This is an important process in the formation of D-alanine and D-glutamate, which are essential bacterial cell wall components. This chain is D-alanine aminotransferase (dat), found in Staphylococcus aureus (strain COL).